We begin with the raw amino-acid sequence, 175 residues long: NAD(P)H-quinone oxidoreductase subunit J (175 aa).

The protein belongs to the complex I 30 kDa subunit family. In terms of assembly, NDH-1 can be composed of about 15 different subunits; different subcomplexes with different compositions have been identified which probably have different functions.

The protein resides in the cellular thylakoid membrane. The enzyme catalyses a plastoquinone + NADH + (n+1) H(+)(in) = a plastoquinol + NAD(+) + n H(+)(out). It carries out the reaction a plastoquinone + NADPH + (n+1) H(+)(in) = a plastoquinol + NADP(+) + n H(+)(out). In terms of biological role, NDH-1 shuttles electrons from an unknown electron donor, via FMN and iron-sulfur (Fe-S) centers, to quinones in the respiratory and/or the photosynthetic chain. The immediate electron acceptor for the enzyme in this species is believed to be plastoquinone. Couples the redox reaction to proton translocation, and thus conserves the redox energy in a proton gradient. Cyanobacterial NDH-1 also plays a role in inorganic carbon-concentration. The polypeptide is NAD(P)H-quinone oxidoreductase subunit J (Nostoc sp. (strain PCC 7120 / SAG 25.82 / UTEX 2576)).